The sequence spans 139 residues: MLHCTQVCLSALTKRTHRVKVQVLKDFPRFQLYKGQVANVKPSLMRNYLHNFNGAKYILSEEHDINTELLKQYQTLEAKLEEDHQQLSKRHETEVQKNMELRKESVFGHKKEEKPKEEKKGLLDSGITIEEVKIPGLDI.

A disordered region spans residues 83–121 (DHQQLSKRHETEVQKNMELRKESVFGHKKEEKPKEEKKG).

The protein belongs to the bacterial ribosomal protein bL9 family. Component of the mitochondrial large ribosomal subunit (mt-LSU). Mature yeast 74S mitochondrial ribosomes consist of a small (37S) and a large (54S) subunit. The 37S small subunit contains a 15S ribosomal RNA (15S mt-rRNA) and 34 different proteins. The 54S large subunit contains a 21S rRNA (21S mt-rRNA) and 46 different proteins.

The protein localises to the mitochondrion. Functionally, component of the mitochondrial ribosome (mitoribosome), a dedicated translation machinery responsible for the synthesis of mitochondrial genome-encoded proteins, including at least some of the essential transmembrane subunits of the mitochondrial respiratory chain. The mitoribosomes are attached to the mitochondrial inner membrane and translation products are cotranslationally integrated into the membrane. The polypeptide is Large ribosomal subunit protein bL9m (MRPL50) (Saccharomyces cerevisiae (strain ATCC 204508 / S288c) (Baker's yeast)).